We begin with the raw amino-acid sequence, 943 residues long: Isoleucine--tRNA ligase (943 aa).

A 'HIGH' region motif is present at residues 58–68; that stretch reads PYANGSIHIGH. L-isoleucyl-5'-AMP is bound at residue Glu-567. A 'KMSKS' region motif is present at residues 608 to 612; the sequence is KMSKS. Residue Lys-611 participates in ATP binding. Cys-906, Cys-909, Cys-926, and Cys-929 together coordinate Zn(2+).

Belongs to the class-I aminoacyl-tRNA synthetase family. IleS type 1 subfamily. In terms of assembly, monomer. Requires Zn(2+) as cofactor.

The protein resides in the cytoplasm. It catalyses the reaction tRNA(Ile) + L-isoleucine + ATP = L-isoleucyl-tRNA(Ile) + AMP + diphosphate. Its function is as follows. Catalyzes the attachment of isoleucine to tRNA(Ile). As IleRS can inadvertently accommodate and process structurally similar amino acids such as valine, to avoid such errors it has two additional distinct tRNA(Ile)-dependent editing activities. One activity is designated as 'pretransfer' editing and involves the hydrolysis of activated Val-AMP. The other activity is designated 'posttransfer' editing and involves deacylation of mischarged Val-tRNA(Ile). In Pseudomonas aeruginosa (strain UCBPP-PA14), this protein is Isoleucine--tRNA ligase.